We begin with the raw amino-acid sequence, 256 residues long: Triosephosphate isomerase (256 aa).

9–11 (NWK) contributes to the substrate binding site. H97 acts as the Electrophile in catalysis. E169 (proton acceptor) is an active-site residue. Substrate is bound by residues G175, S214, and 235 to 236 (GG).

This sequence belongs to the triosephosphate isomerase family. As to quaternary structure, homodimer.

The protein resides in the cytoplasm. The catalysed reaction is D-glyceraldehyde 3-phosphate = dihydroxyacetone phosphate. The protein operates within carbohydrate biosynthesis; gluconeogenesis. It functions in the pathway carbohydrate degradation; glycolysis; D-glyceraldehyde 3-phosphate from glycerone phosphate: step 1/1. Functionally, involved in the gluconeogenesis. Catalyzes stereospecifically the conversion of dihydroxyacetone phosphate (DHAP) to D-glyceraldehyde-3-phosphate (G3P). This Moritella marina (Vibrio marinus) protein is Triosephosphate isomerase.